We begin with the raw amino-acid sequence, 437 residues long: MSMFLDTAKISVQAGRGGDGMVAFRREKYVPNGGPWGGDGGKGGSVIFRVNEGLRTLMDFRYNRKFKAKSGEKGMTKGMHGRGAEDLIVFVPQGTTVRDAETGKVITDLVEHGQEVVIAKGGRGGRGNIRFATPRNPAPEIAENGEPGEERQLELELKILADVGLVGFPSVGKSTLLSVVSSAKPKIGAYHFTTIVPNLGMVRTKSGDSFAMADLPGLIEGASQGVGLGTQFLRHIERTRVILHVIDMSASEGRDPYEDYVSINNELETYNLRLMERPQIIVANKMDMPEAQENLKAFKKKLAAQYDEFDDLPMIFPISSLAHQGLENLLEATAELLAKTDEFLLYDESDLVDEEAYYGFAEAEKEFEITRDDDATWVLSGEKLERLFVMTNMERDESIMKFARQLRGMGVDEALRERGAKDGDLVRIGKFEFEFVD.

One can recognise an Obg domain in the interval 2-160 (SMFLDTAKIS…RQLELELKIL (159 aa)). The region spanning 161-338 (ADVGLVGFPS…LLEATAELLA (178 aa)) is the OBG-type G domain. Residues 167-174 (GFPSVGKS), 192-196 (FTTIV), 214-217 (DLPG), 284-287 (NKMD), and 319-321 (SSL) each bind GTP. Serine 174 and threonine 194 together coordinate Mg(2+). The OCT domain occupies 359–437 (GFAEAEKEFE…IGKFEFEFVD (79 aa)).

Belongs to the TRAFAC class OBG-HflX-like GTPase superfamily. OBG GTPase family. Monomer. Mg(2+) serves as cofactor.

The protein resides in the cytoplasm. Functionally, an essential GTPase which binds GTP, GDP and possibly (p)ppGpp with moderate affinity, with high nucleotide exchange rates and a fairly low GTP hydrolysis rate. Plays a role in control of the cell cycle, stress response, ribosome biogenesis and in those bacteria that undergo differentiation, in morphogenesis control. In Streptococcus pyogenes serotype M28 (strain MGAS6180), this protein is GTPase Obg.